Here is a 446-residue protein sequence, read N- to C-terminus: tRNA-2-methylthio-N(6)-dimethylallyladenosine synthase (446 aa).

In terms of domain architecture, MTTase N-terminal spans 5-121 (KYLYVETFGC…LPEIVRAAER (117 aa)). Cys-14, Cys-50, Cys-84, Cys-159, Cys-163, and Cys-166 together coordinate [4Fe-4S] cluster. The Radical SAM core domain maps to 145-375 (GEGGVTRFVT…QTLQQQMKRE (231 aa)). A TRAM domain is found at 378–440 (ISFVGTRQLV…QNSLLGEIVT (63 aa)).

Belongs to the methylthiotransferase family. MiaB subfamily. As to quaternary structure, monomer. Requires [4Fe-4S] cluster as cofactor.

Its subcellular location is the cytoplasm. The catalysed reaction is N(6)-dimethylallyladenosine(37) in tRNA + (sulfur carrier)-SH + AH2 + 2 S-adenosyl-L-methionine = 2-methylsulfanyl-N(6)-dimethylallyladenosine(37) in tRNA + (sulfur carrier)-H + 5'-deoxyadenosine + L-methionine + A + S-adenosyl-L-homocysteine + 2 H(+). Functionally, catalyzes the methylthiolation of N6-(dimethylallyl)adenosine (i(6)A), leading to the formation of 2-methylthio-N6-(dimethylallyl)adenosine (ms(2)i(6)A) at position 37 in tRNAs that read codons beginning with uridine. The protein is tRNA-2-methylthio-N(6)-dimethylallyladenosine synthase of Geobacter sulfurreducens (strain ATCC 51573 / DSM 12127 / PCA).